Reading from the N-terminus, the 258-residue chain is MLLVLVVLIPVLVSSGGPEGHYEMLGTCRMVCDPYPARGPGAGARTDGGDALSEQSGAPPPSTLVQGPQGKPGRTGKPGPPGPPGDPGPPGPVGPPGEKGEPGKPGPPGLPGAGGSGAISTATYTTVPRVAFYAGLKNPHEGYEVLKFDDVVTNLGNNYDAASGKFTCNIPGTYFFTYHVLMRGGDGTSMWADLCKNGQVRASAIAQDADQNYDYASNSVILHLDAGDEVFIKLDGGKAHGGNSNKYSTFSGFIIYSD.

The N-terminal stretch at 1-16 (MLLVLVVLIPVLVSSG) is a signal peptide. The segment at 39–117 (GPGAGARTDG…PGLPGAGGSG (79 aa)) is disordered. The span at 67 to 77 (GPQGKPGRTGK) shows a compositional bias: low complexity. The Collagen-like domain maps to 67–115 (GPQGKPGRTGKPGPPGPPGDPGPPGPVGPPGEKGEPGKPGPPGLPGAGG). A compositionally biased stretch (pro residues) spans 78-95 (PGPPGPPGDPGPPGPVGP). The C1q domain maps to 125-258 (TTVPRVAFYA…TFSGFIIYSD (134 aa)).

As to quaternary structure, interacts with ADGRB3. Forms heterooligomers with C1QL4, when proteins are coexpressed; this interaction does not occur after secretion. Expressed in brainstem.

The protein resides in the secreted. Its function is as follows. May regulate the number of excitatory synapses that are formed on hippocampus neurons. Has no effect on inhibitory synapses. This chain is C1q-related factor (C1QL1), found in Homo sapiens (Human).